The primary structure comprises 199 residues: Ribonuclease HII (199 aa).

An RNase H type-2 domain is found at 7–196 (PWVCGVDEAG…VRELMANEKD (190 aa)). A divalent metal cation-binding residues include aspartate 13, glutamate 14, and aspartate 105.

This sequence belongs to the RNase HII family. Mn(2+) is required as a cofactor. It depends on Mg(2+) as a cofactor.

The protein localises to the cytoplasm. The enzyme catalyses Endonucleolytic cleavage to 5'-phosphomonoester.. Endonuclease that specifically degrades the RNA of RNA-DNA hybrids. The chain is Ribonuclease HII from Nitrosospira multiformis (strain ATCC 25196 / NCIMB 11849 / C 71).